The chain runs to 292 residues: Acetylglutamate kinase (292 aa).

Substrate-binding positions include 64–65 (GG), Arg-86, and Asn-190.

This sequence belongs to the acetylglutamate kinase family. ArgB subfamily.

Its subcellular location is the cytoplasm. It catalyses the reaction N-acetyl-L-glutamate + ATP = N-acetyl-L-glutamyl 5-phosphate + ADP. It functions in the pathway amino-acid biosynthesis; L-arginine biosynthesis; N(2)-acetyl-L-ornithine from L-glutamate: step 2/4. In terms of biological role, catalyzes the ATP-dependent phosphorylation of N-acetyl-L-glutamate. The chain is Acetylglutamate kinase from Geobacter sp. (strain M21).